A 246-amino-acid polypeptide reads, in one-letter code: UDP-N-acetyl-D-mannosaminuronic acid transferase (246 aa).

It belongs to the glycosyltransferase 26 family.

It carries out the reaction UDP-N-acetyl-alpha-D-mannosaminouronate + N-acetyl-alpha-D-glucosaminyl-di-trans,octa-cis-undecaprenyl diphosphate = beta-D-ManNAcA-(1-&gt;4)-alpha-D-GlcNAc-di-trans,octa-cis-undecaprenyl diphosphate + UDP + H(+). The protein operates within bacterial outer membrane biogenesis; enterobacterial common antigen biosynthesis. Its function is as follows. Catalyzes the synthesis of Und-PP-GlcNAc-ManNAcA (Lipid II), the second lipid-linked intermediate involved in enterobacterial common antigen (ECA) synthesis. The polypeptide is UDP-N-acetyl-D-mannosaminuronic acid transferase (Escherichia coli O7:K1 (strain IAI39 / ExPEC)).